The primary structure comprises 255 residues: 5-oxoprolinase subunit A (255 aa).

The protein belongs to the LamB/PxpA family. As to quaternary structure, forms a complex composed of PxpA, PxpB and PxpC.

The enzyme catalyses 5-oxo-L-proline + ATP + 2 H2O = L-glutamate + ADP + phosphate + H(+). In terms of biological role, catalyzes the cleavage of 5-oxoproline to form L-glutamate coupled to the hydrolysis of ATP to ADP and inorganic phosphate. This is 5-oxoprolinase subunit A from Pyrococcus horikoshii (strain ATCC 700860 / DSM 12428 / JCM 9974 / NBRC 100139 / OT-3).